The chain runs to 190 residues: Glucose-6-phosphate isomerase (190 aa).

4 residues coordinate Fe cation: histidine 89, histidine 91, glutamate 98, and histidine 137.

Belongs to the archaeal-type GPI family. In terms of assembly, homodimer. The cofactor is Fe cation.

It is found in the cytoplasm. It catalyses the reaction alpha-D-glucose 6-phosphate = beta-D-fructose 6-phosphate. The protein operates within carbohydrate degradation; glycolysis; D-glyceraldehyde 3-phosphate and glycerone phosphate from D-glucose: step 2/4. Inhibited by mannose 6-phosphate, fructose 1-phosphate and fructose 1,6-bisphosphate. Its activity is also inhibited by Cobalt (II) ions &lt; EDTA &lt; nickel (II) ions &lt; zinc (II) ions &lt;&lt; cadmium (II) ions &lt; copper (II) ions. Sodium and potassium ions and manganese ions show little or no effect on activity. The polypeptide is Glucose-6-phosphate isomerase (pgiA) (Thermococcus litoralis).